Reading from the N-terminus, the 267-residue chain is MIATIRVVVTGAAGRMGREMTRGLLQTEDIAVVGAVDRREVGVDIGSLNGLPPAGVIIQEDLAGVIASARPEVMVDFTVAAAALANARLAVEQGVSPVIGTTGISLERLDELHQLCEARQVGAVVAPNFSLGAILMMHFAEEAARYFPRAEIIEIHHDQKIDAPSGTALKTAELMAARVNRPLTPSPAEEKVAGARGATYQGLAVHSVRLPGAVAHQEVIFGGQGQLLTIRHDTTSREAFLPGLLLAIKKVRQLKGVVYGLENLLEF.

Position 11-16 (11-16 (GAAGRM)) interacts with NAD(+). Arg-39 contributes to the NADP(+) binding site. NAD(+) is bound by residues 100 to 102 (GTT) and 126 to 129 (APNF). The active-site Proton donor/acceptor is His-156. His-157 lines the (S)-2,3,4,5-tetrahydrodipicolinate pocket. The active-site Proton donor is Lys-160. 166-167 (GT) is a binding site for (S)-2,3,4,5-tetrahydrodipicolinate.

It belongs to the DapB family.

The protein resides in the cytoplasm. It carries out the reaction (S)-2,3,4,5-tetrahydrodipicolinate + NAD(+) + H2O = (2S,4S)-4-hydroxy-2,3,4,5-tetrahydrodipicolinate + NADH + H(+). The enzyme catalyses (S)-2,3,4,5-tetrahydrodipicolinate + NADP(+) + H2O = (2S,4S)-4-hydroxy-2,3,4,5-tetrahydrodipicolinate + NADPH + H(+). Its pathway is amino-acid biosynthesis; L-lysine biosynthesis via DAP pathway; (S)-tetrahydrodipicolinate from L-aspartate: step 4/4. Its function is as follows. Catalyzes the conversion of 4-hydroxy-tetrahydrodipicolinate (HTPA) to tetrahydrodipicolinate. The polypeptide is 4-hydroxy-tetrahydrodipicolinate reductase (Moorella thermoacetica (strain ATCC 39073 / JCM 9320)).